The chain runs to 173 residues: Photosystem I assembly protein Ycf3 (173 aa).

3 TPR repeats span residues 35 to 68, 72 to 105, and 120 to 153; these read AYIY…EENK, GETL…NPKQ, and GRNA…YPGG.

Belongs to the Ycf3 family.

The protein localises to the cellular thylakoid membrane. Its function is as follows. Essential for the assembly of the photosystem I (PSI) complex. May act as a chaperone-like factor to guide the assembly of the PSI subunits. The protein is Photosystem I assembly protein Ycf3 of Prochlorococcus marinus (strain MIT 9312).